Consider the following 91-residue polypeptide: Cell division protein FtsB (91 aa).

Over 1 to 3 the chain is Cytoplasmic; the sequence is MRW. A helical transmembrane segment spans residues 4–21; it reads PVIILAVLVVVLQYPLWL. Residues 22 to 91 lie on the Periplasmic side of the membrane; sequence GKGGWLRVWE…EIFVQVPQKH (70 aa). The stretch at 28–72 forms a coiled coil; that stretch reads RVWEVDRKLHEQREENTRLEERNAGLDAEVRDLKSGNEAIEERAR.

The protein belongs to the FtsB family. Part of a complex composed of FtsB, FtsL and FtsQ.

It is found in the cell inner membrane. Its function is as follows. Essential cell division protein. May link together the upstream cell division proteins, which are predominantly cytoplasmic, with the downstream cell division proteins, which are predominantly periplasmic. This Azoarcus sp. (strain BH72) protein is Cell division protein FtsB.